A 680-amino-acid polypeptide reads, in one-letter code: DNA-directed RNA polymerase subunit beta' (680 aa).

Zn(2+)-binding residues include Cys-69, Cys-71, Cys-87, and Cys-90. Positions 489, 491, and 493 each coordinate Mg(2+).

This sequence belongs to the RNA polymerase beta' chain family. RpoC1 subfamily. In plastids the minimal PEP RNA polymerase catalytic core is composed of four subunits: alpha, beta, beta', and beta''. When a (nuclear-encoded) sigma factor is associated with the core the holoenzyme is formed, which can initiate transcription. Mg(2+) serves as cofactor. Requires Zn(2+) as cofactor.

It is found in the plastid. The protein resides in the chloroplast. It carries out the reaction RNA(n) + a ribonucleoside 5'-triphosphate = RNA(n+1) + diphosphate. Functionally, DNA-dependent RNA polymerase catalyzes the transcription of DNA into RNA using the four ribonucleoside triphosphates as substrates. The sequence is that of DNA-directed RNA polymerase subunit beta' from Cucumis sativus (Cucumber).